We begin with the raw amino-acid sequence, 434 residues long: Nicotinate phosphoribosyltransferase (434 aa).

H242 is modified (phosphohistidine; by autocatalysis).

Belongs to the NAPRTase family. Transiently phosphorylated on a His residue during the reaction cycle. Phosphorylation strongly increases the affinity for substrates and increases the rate of nicotinate D-ribonucleotide production. Dephosphorylation regenerates the low-affinity form of the enzyme, leading to product release.

It catalyses the reaction nicotinate + 5-phospho-alpha-D-ribose 1-diphosphate + ATP + H2O = nicotinate beta-D-ribonucleotide + ADP + phosphate + diphosphate. Its pathway is cofactor biosynthesis; NAD(+) biosynthesis; nicotinate D-ribonucleotide from nicotinate: step 1/1. Functionally, catalyzes the synthesis of beta-nicotinate D-ribonucleotide from nicotinate and 5-phospho-D-ribose 1-phosphate at the expense of ATP. The chain is Nicotinate phosphoribosyltransferase from Sinorhizobium fredii (strain NBRC 101917 / NGR234).